Consider the following 116-residue polypeptide: Large ribosomal subunit protein bL17 (116 aa).

It belongs to the bacterial ribosomal protein bL17 family. As to quaternary structure, part of the 50S ribosomal subunit. Contacts protein L32.

In Nostoc punctiforme (strain ATCC 29133 / PCC 73102), this protein is Large ribosomal subunit protein bL17.